Here is a 72-residue protein sequence, read N- to C-terminus: Translation initiation factor IF-1 (72 aa).

Residues 1 to 72 form the S1-like domain; that stretch reads MSKDDVIEID…DKGRITYRYK (72 aa).

This sequence belongs to the IF-1 family. Component of the 30S ribosomal translation pre-initiation complex which assembles on the 30S ribosome in the order IF-2 and IF-3, IF-1 and N-formylmethionyl-tRNA(fMet); mRNA recruitment can occur at any time during PIC assembly.

It is found in the cytoplasm. One of the essential components for the initiation of protein synthesis. Stabilizes the binding of IF-2 and IF-3 on the 30S subunit to which N-formylmethionyl-tRNA(fMet) subsequently binds. Helps modulate mRNA selection, yielding the 30S pre-initiation complex (PIC). Upon addition of the 50S ribosomal subunit IF-1, IF-2 and IF-3 are released leaving the mature 70S translation initiation complex. The protein is Translation initiation factor IF-1 of Campylobacter hominis (strain ATCC BAA-381 / DSM 21671 / CCUG 45161 / LMG 19568 / NCTC 13146 / CH001A).